The following is a 245-amino-acid chain: Serine/arginine-rich splicing factor 1B (245 aa).

Residues 15 to 90 (CRIYVGNLPP…YRLRVEFPRS (76 aa)) form the RRM 1 domain. Disordered regions lie at residues 89–116 (RSGR…PPSR) and 192–245 (KVDG…RSRT). Residues 91–106 (GRGGGRGGGGGGGVGA) show a composition bias toward gly residues. Positions 120-194 (YRVIVSGLPP…ETAYIRVKVD (75 aa)) constitute an RRM 2 domain. A compositionally biased stretch (basic residues) spans 204-245 (SRSRSRSRSRSRSNSRSRSYSPRRSRGSPRYSPRHSRSRSRT).

It belongs to the splicing factor SR family.

Its subcellular location is the cytoplasm. The protein localises to the nucleus speckle. Its function is as follows. May play a role in preventing exon skipping, ensuring the accuracy of splicing and regulating alternative splicing. This chain is Serine/arginine-rich splicing factor 1B (srsf1b), found in Danio rerio (Zebrafish).